We begin with the raw amino-acid sequence, 36 residues long: Kappa-theraphotoxin-Pg1b (36 aa).

Intrachain disulfides connect cysteine 4-cysteine 19, cysteine 11-cysteine 24, and cysteine 18-cysteine 31.

It belongs to the neurotoxin 10 (Hwtx-1) family. 44 (Jztx-4) subfamily. Expressed by the venom gland.

It localises to the secreted. In terms of biological role, gating modifier of Kv2.1/KCNB1, Kv2.2/KCNB2 and Kv4.3/KCND3 channels. The chain is Kappa-theraphotoxin-Pg1b from Chilobrachys guangxiensis (Chinese earth tiger tarantula).